The chain runs to 284 residues: 3-methyl-2-oxobutanoate hydroxymethyltransferase (284 aa).

Asp-44 and Asp-83 together coordinate Mg(2+). 3-methyl-2-oxobutanoate contacts are provided by residues 44–45 (DS), Asp-83, and Lys-112. Residue Glu-114 participates in Mg(2+) binding. Catalysis depends on Glu-181, which acts as the Proton acceptor.

It belongs to the PanB family. As to quaternary structure, homodecamer; pentamer of dimers. It depends on Mg(2+) as a cofactor.

It is found in the cytoplasm. It catalyses the reaction 3-methyl-2-oxobutanoate + (6R)-5,10-methylene-5,6,7,8-tetrahydrofolate + H2O = 2-dehydropantoate + (6S)-5,6,7,8-tetrahydrofolate. The protein operates within cofactor biosynthesis; coenzyme A biosynthesis. With respect to regulation, neither activated nor inhibited by coenzyme A. In terms of biological role, catalyzes the reversible reaction in which hydroxymethyl group from 5,10-methylenetetrahydrofolate is transferred onto alpha-ketoisovalerate to form ketopantoate. The chain is 3-methyl-2-oxobutanoate hydroxymethyltransferase from Thermococcus kodakarensis (strain ATCC BAA-918 / JCM 12380 / KOD1) (Pyrococcus kodakaraensis (strain KOD1)).